The following is a 156-amino-acid chain: Small ribosomal subunit protein uS7 (156 aa).

It belongs to the universal ribosomal protein uS7 family. Part of the 30S ribosomal subunit. Contacts proteins S9 and S11.

In terms of biological role, one of the primary rRNA binding proteins, it binds directly to 16S rRNA where it nucleates assembly of the head domain of the 30S subunit. Is located at the subunit interface close to the decoding center, probably blocks exit of the E-site tRNA. This chain is Small ribosomal subunit protein uS7, found in Pseudomonas fluorescens (strain SBW25).